The following is a 549-amino-acid chain: Probable protein kinase UbiB (549 aa).

The region spanning 123 to 501 (DFDDTPLASA…QQKAHKSNYL (379 aa)) is the Protein kinase domain. ATP contacts are provided by residues 129–137 (LASASISQV) and Lys-152. Asp-287 serves as the catalytic Proton acceptor. 2 helical membrane-spanning segments follow: residues 498 to 518 (SNYLLITSAILVICGTILLNQ) and 520 to 540 (ATLWPSYGSIGIGITLWVLGW).

The protein belongs to the ABC1 family. UbiB subfamily.

The protein localises to the cell inner membrane. Its pathway is cofactor biosynthesis; ubiquinone biosynthesis [regulation]. Its function is as follows. Is probably a protein kinase regulator of UbiI activity which is involved in aerobic coenzyme Q (ubiquinone) biosynthesis. This chain is Probable protein kinase UbiB, found in Shewanella pealeana (strain ATCC 700345 / ANG-SQ1).